Consider the following 507-residue polypeptide: Proton-coupled zinc antiporter SLC30A1 (507 aa).

The Cytoplasmic portion of the chain corresponds to 1–10; it reads MGCWGRNRGR. Residues 11 to 31 traverse the membrane as a helical segment; that stretch reads LLCMLALTFMFMVLEVVVSRV. At 32-35 the chain is on the extracellular side; that stretch reads TSSL. A helical membrane pass occupies residues 36 to 56; it reads AMLSDSFHMLSDVLALVVALV. Residues His-43 and Asp-47 each contribute to the Zn(2+) site. Residues 57-78 are Cytoplasmic-facing; sequence AERFARRTHATQKNTFGWIRAE. A helical membrane pass occupies residues 79 to 99; sequence VMGALVNAIFLTGLCFAILLE. The Extracellular segment spans residues 100–113; that stretch reads AIERFIEPHEMQQP. The chain crosses the membrane as a helical span at residues 114-134; the sequence is LVVLGVGVAGLLVNVLGLCLF. Residues 135-248 lie on the Cytoplasmic side of the membrane; sequence HHHSGFSQDS…RAGQLNMRGV (114 aa). The tract at residues 142-217 is disordered; it reads QDSGHGHSHG…DPENPRSGDT (76 aa). The segment at 146 to 158 is 6 X 2 AA approximate repeats of H-G; the sequence is HGHSHGGHGHGHG. The span at 147-167 shows a compositional bias: basic residues; the sequence is GHSHGGHGHGHGLPKGPRVKS. Residues 189 to 201 are compositionally biased toward polar residues; that stretch reads TNTLVANTSNSNG. A helical membrane pass occupies residues 249 to 269; that stretch reads FLHVLGDALGSVIVVVNALVF. Positions 251 and 255 each coordinate Zn(2+). Topologically, residues 270–308 are extracellular; the sequence is YFSWKGCSEGDFCVNPCFPDPCKAFVEIINSTHASVYEA. Residue Asn-299 is glycosylated (N-linked (GlcNAc...) asparagine). Residues 309–329 traverse the membrane as a helical segment; it reads GPCWVLYLDPTLCVVMVCILL. At 330-507 the chain is on the cytoplasmic side; that stretch reads YTTYPLLKES…MPNKQPESSL (178 aa). Ser-506 is modified (phosphoserine).

It belongs to the cation diffusion facilitator (CDF) transporter (TC 2.A.4) family. SLC30A subfamily. Homodimer. Interacts with TMEM163. Interacts and forms a complex with TMC6 and TMC8; the interaction regulates zinc transport into the ER. As to quaternary structure, (Microbial infection) Interacts with human papillomavirus 16/HPV16 protein E5; the interaction alleviates SLC30A1-mediated transcription factors inhibition. N-glycosylated at Asn-299. N-glycosylation promotes endocytosis and degradation through the proteasomal or lysosomal pathways.

It is found in the cell membrane. The protein resides in the basolateral cell membrane. The protein localises to the cytoplasmic vesicle membrane. Its subcellular location is the cytoplasm. It localises to the endoplasmic reticulum membrane. It is found in the golgi apparatus membrane. The protein resides in the nucleus membrane. It carries out the reaction Zn(2+)(in) + 2 H(+)(out) = Zn(2+)(out) + 2 H(+)(in). Its function is as follows. Zinc ion:proton antiporter that could function at the plasma membrane mediating zinc efflux from cells against its electrochemical gradient protecting them from intracellular zinc accumulation and toxicity. Alternatively, could prevent the transport to the plasma membrane of CACNB2, the L-type calcium channels regulatory subunit, through a yet to be defined mechanism. By modulating the expression of these channels at the plasma membrane, could prevent calcium and zinc influx into cells. By the same mechanism, could also prevent L-type calcium channels-mediated heavy metal influx into cells. In some cells, could also function as a zinc ion:proton antiporter mediating zinc entry into the lumen of cytoplasmic vesicles. In macrophages, can increase zinc ions concentration into the lumen of cytoplasmic vesicles containing engulfed bacteria and could help inactivate them. Forms a complex with TMC6/EVER1 and TMC8/EVER2 at the ER membrane of keratynocytes which facilitates zinc uptake into the ER. Down-regulates the activity of transcription factors induced by zinc and cytokines. The polypeptide is Proton-coupled zinc antiporter SLC30A1 (Homo sapiens (Human)).